The following is a 272-amino-acid chain: Phosphate import ATP-binding protein PstB (272 aa).

The ABC transporter domain occupies isoleucine 26 to isoleucine 267. Glycine 58 to serine 65 contacts ATP.

Belongs to the ABC transporter superfamily. Phosphate importer (TC 3.A.1.7) family. As to quaternary structure, the complex is composed of two ATP-binding proteins (PstB), two transmembrane proteins (PstC and PstA) and a solute-binding protein (PstS).

The protein resides in the cell inner membrane. It carries out the reaction phosphate(out) + ATP + H2O = ADP + 2 phosphate(in) + H(+). Its function is as follows. Part of the ABC transporter complex PstSACB involved in phosphate import. Responsible for energy coupling to the transport system. The sequence is that of Phosphate import ATP-binding protein PstB from Hydrogenovibrio crunogenus (strain DSM 25203 / XCL-2) (Thiomicrospira crunogena).